We begin with the raw amino-acid sequence, 543 residues long: Chaperonin GroEL 1 (543 aa).

ATP-binding positions include 29 to 32 (TLGP), Lys50, 86 to 90 (DGTTT), Gly414, and Asp493. The tract at residues 524–543 (KEDKGAPAGMGGMPPGGGMY) is disordered. The segment covering 531-543 (AGMGGMPPGGGMY) has biased composition (gly residues).

This sequence belongs to the chaperonin (HSP60) family. Forms a cylinder of 14 subunits composed of two heptameric rings stacked back-to-back. Interacts with the co-chaperonin GroES.

The protein localises to the cytoplasm. It carries out the reaction ATP + H2O + a folded polypeptide = ADP + phosphate + an unfolded polypeptide.. Together with its co-chaperonin GroES, plays an essential role in assisting protein folding. The GroEL-GroES system forms a nano-cage that allows encapsulation of the non-native substrate proteins and provides a physical environment optimized to promote and accelerate protein folding. This is Chaperonin GroEL 1 from Syntrophobacter fumaroxidans (strain DSM 10017 / MPOB).